Consider the following 365-residue polypeptide: UDP-N-acetylglucosamine--N-acetylmuramyl-(pentapeptide) pyrophosphoryl-undecaprenol N-acetylglucosamine transferase (365 aa).

Residues 11-13 (TGG), Asn-124, Arg-165, Ser-192, Ile-246, and Gln-291 each bind UDP-N-acetyl-alpha-D-glucosamine.

The protein belongs to the glycosyltransferase 28 family. MurG subfamily.

The protein localises to the cell inner membrane. It catalyses the reaction di-trans,octa-cis-undecaprenyl diphospho-N-acetyl-alpha-D-muramoyl-L-alanyl-D-glutamyl-meso-2,6-diaminopimeloyl-D-alanyl-D-alanine + UDP-N-acetyl-alpha-D-glucosamine = di-trans,octa-cis-undecaprenyl diphospho-[N-acetyl-alpha-D-glucosaminyl-(1-&gt;4)]-N-acetyl-alpha-D-muramoyl-L-alanyl-D-glutamyl-meso-2,6-diaminopimeloyl-D-alanyl-D-alanine + UDP + H(+). Its pathway is cell wall biogenesis; peptidoglycan biosynthesis. In terms of biological role, cell wall formation. Catalyzes the transfer of a GlcNAc subunit on undecaprenyl-pyrophosphoryl-MurNAc-pentapeptide (lipid intermediate I) to form undecaprenyl-pyrophosphoryl-MurNAc-(pentapeptide)GlcNAc (lipid intermediate II). In Nitratidesulfovibrio vulgaris (strain ATCC 29579 / DSM 644 / CCUG 34227 / NCIMB 8303 / VKM B-1760 / Hildenborough) (Desulfovibrio vulgaris), this protein is UDP-N-acetylglucosamine--N-acetylmuramyl-(pentapeptide) pyrophosphoryl-undecaprenol N-acetylglucosamine transferase.